Reading from the N-terminus, the 86-residue chain is MAKTHSLSSKILIGLIRVYQVVISPLIGPRCRFTPTCSCYGIEAVKTHGAIKGSWLTLKRILKCHPLNAGGYDPVPPKINNKKEKK.

This sequence belongs to the UPF0161 family.

The protein resides in the cell inner membrane. Functionally, could be involved in insertion of integral membrane proteins into the membrane. The protein is Putative membrane protein insertion efficiency factor of Pasteurella multocida (strain Pm70).